We begin with the raw amino-acid sequence, 620 residues long: Leucine-rich repeat and immunoglobulin-like domain-containing nogo receptor-interacting protein 1 (620 aa).

The first 41 residues, 1–41, serve as a signal peptide directing secretion; sequence MQVSKRMLAGGVRSMPSPLLACWQPILLLVLGSVLSGSATG. Disulfide bonds link cysteine 42–cysteine 48 and cysteine 46–cysteine 57. The 30-residue stretch at 42–71 folds into the LRRNT domain; it reads CPPRCECSAQDRAVLCHRKRFVAVPEGIPT. Over 42 to 561 the chain is Extracellular; sequence CPPRCECSAQ…FDIKTLIIAT (520 aa). 11 LRR repeats span residues 72–93, 96–117, 120–141, 144–165, 168–189, 192–213, 216–237, 264–285, 288–309, 312–333, and 336–357; these read ETRL…EFAS, HLEE…AFNN, NLRT…VFTG, NLTK…MFQD, NLKS…AFSG, SLEQ…ALSH, GLIV…SFKR, NLTS…AVRH, YLRF…MLHE, RLQE…AFRG, and YLRV…VFHS. A glycan (N-linked (GlcNAc...) asparagine) is linked at asparagine 144. Residue asparagine 202 is glycosylated (N-linked (GlcNAc...) asparagine). Residues asparagine 264, asparagine 274, and asparagine 293 are each glycosylated (N-linked (GlcNAc...) asparagine). N-linked (GlcNAc...) asparagine glycosylation occurs at asparagine 341. Residues 369 to 423 enclose the LRRCT domain; that stretch reads NPLACDCRLLWVFRRRWRLNFNRQQPTCATPEFVQGKEFKDFPDVLLPNYFTCRR. Cystine bridges form between cysteine 373/cysteine 396, cysteine 375/cysteine 421, and cysteine 446/cysteine 497. An Ig-like C2-type domain is found at 411 to 513; the sequence is PDVLLPNYFT…GNDSMPAHLH (103 aa). Residues asparagine 492, asparagine 505, asparagine 526, and asparagine 542 are each glycosylated (N-linked (GlcNAc...) asparagine). Residues 562–582 traverse the membrane as a helical segment; it reads TMGFISFLGVVLFCLVLLFLW. Topologically, residues 583–620 are cytoplasmic; the sequence is SRGKGNTKHNIEIEYVPRKSDAGISSADAPRKFNMKMI. The residue at position 602 (serine 602) is a Phosphoserine.

Homotetramer. Forms a ternary complex with RTN4R/NGFR and RTN4R/TNFRSF19. Interacts with NGRF and MYT1L. Interacts with RTN4R. N-glycosylated. Contains predominantly high-mannose glycans. Expressed exclusively in the central nervous system. Highest level in the in amygdala, hippocampus, thalamus and cerebral cortex. In the rest of the brain a basal expression seems to be always present. Up-regulated in substantia nigra neurons from Parkinson disease patients.

The protein localises to the cell membrane. Functionally, functional component of the Nogo receptor signaling complex (RTN4R/NGFR) in RhoA activation responsible for some inhibition of axonal regeneration by myelin-associated factors. Is also an important negative regulator of oligodentrocyte differentiation and axonal myelination. Acts in conjunction with RTN4 and RTN4R in regulating neuronal precursor cell motility during cortical development. The protein is Leucine-rich repeat and immunoglobulin-like domain-containing nogo receptor-interacting protein 1 (LINGO1) of Homo sapiens (Human).